Reading from the N-terminus, the 348-residue chain is Holliday junction branch migration complex subunit RuvB (348 aa).

The interval 4–186 is large ATPase domain (RuvB-L); that stretch reads TDRIISANTV…FGIIQRLEFY (183 aa). ATP-binding positions include Ile25, Arg26, Gly67, Lys70, Thr71, Thr72, 133–135, Arg176, Tyr186, and Arg223; that span reads EDY. A Mg(2+)-binding site is contributed by Thr71. The segment at 187–257 is small ATPAse domain (RuvB-S); sequence SVDDLAKIVY…IADKALTMLK (71 aa). The interval 260–348 is head domain (RuvB-H); the sequence is PVGFDHMDHK…SSDQQQNLSL (89 aa). Positions 315 and 320 each coordinate DNA.

The protein belongs to the RuvB family. Homohexamer. Forms an RuvA(8)-RuvB(12)-Holliday junction (HJ) complex. HJ DNA is sandwiched between 2 RuvA tetramers; dsDNA enters through RuvA and exits via RuvB. An RuvB hexamer assembles on each DNA strand where it exits the tetramer. Each RuvB hexamer is contacted by two RuvA subunits (via domain III) on 2 adjacent RuvB subunits; this complex drives branch migration. In the full resolvosome a probable DNA-RuvA(4)-RuvB(12)-RuvC(2) complex forms which resolves the HJ.

It is found in the cytoplasm. The enzyme catalyses ATP + H2O = ADP + phosphate + H(+). Functionally, the RuvA-RuvB-RuvC complex processes Holliday junction (HJ) DNA during genetic recombination and DNA repair, while the RuvA-RuvB complex plays an important role in the rescue of blocked DNA replication forks via replication fork reversal (RFR). RuvA specifically binds to HJ cruciform DNA, conferring on it an open structure. The RuvB hexamer acts as an ATP-dependent pump, pulling dsDNA into and through the RuvAB complex. RuvB forms 2 homohexamers on either side of HJ DNA bound by 1 or 2 RuvA tetramers; 4 subunits per hexamer contact DNA at a time. Coordinated motions by a converter formed by DNA-disengaged RuvB subunits stimulates ATP hydrolysis and nucleotide exchange. Immobilization of the converter enables RuvB to convert the ATP-contained energy into a lever motion, pulling 2 nucleotides of DNA out of the RuvA tetramer per ATP hydrolyzed, thus driving DNA branch migration. The RuvB motors rotate together with the DNA substrate, which together with the progressing nucleotide cycle form the mechanistic basis for DNA recombination by continuous HJ branch migration. Branch migration allows RuvC to scan DNA until it finds its consensus sequence, where it cleaves and resolves cruciform DNA. This chain is Holliday junction branch migration complex subunit RuvB, found in Francisella philomiragia subsp. philomiragia (strain ATCC 25017 / CCUG 19701 / FSC 153 / O#319-036).